The chain runs to 349 residues: MDTIAARALTVIKACNTLKEVRIVVESNVLEILGIAVNRYNGLTLRSVTMRPTSQEQRNEMFYMCLDMILAAANLNVGNISPDYIQNLATIGVLATPEIPYTMESANEIARMSGETGTWGPDRQPFGYFLAAPEVTQHGRFRQRVGQNVTTSIVSSTLAQVSMNAGARGDIQALFQNQNDPVMIYFVWRRIGTFSNAAGNAQDTPQGVTLNVGGVNMRAGVIIAYDGQAPVNVNNPGLGQGMIEIEVIYYLSLDKTMTQYPSLQAHIFNVYSYKNPLWHGLRAAILNRTTLPNNIPPIYPPHDRENVLLIILLSALADAFSVLAPDFNLFGVVPIQGPINRAVAQNAYV.

N-linked (GlcNAc...) asparagine; by host glycans are attached at residues N148 and N287.

The protein belongs to the orbivirus VP7 family.

The protein resides in the virion. Its function is as follows. The VP7 protein is one of the five proteins (with VP1, VP3, VP4, and VP6) which form the inner capsid of the virus. The polypeptide is Core protein VP7 (Segment-7) (Epizootic hemorrhagic disease virus 1 (EHDV-1)).